A 742-amino-acid polypeptide reads, in one-letter code: Hapless 2 (742 aa).

The signal sequence occupies residues 1–19 (MKFLAFGLIYFHFCILNRC). The Extracellular segment spans residues 20–540 (EYITSSTIQK…CYFSAGCIKE (521 aa)). Cystine bridges form between Cys-30/Cys-40, Cys-118/Cys-147, Cys-129/Cys-182, Cys-148/Cys-312, Cys-150/Cys-168, Cys-295/Cys-319, and Cys-431/Cys-470. Residues 152 to 179 (LSDILGMGNDLSRGKVCYALNLGAGSAT) are important for membrane fusion. A helical transmembrane segment spans residues 541 to 561 (AFKSIASIAGVASALALVIFL). Topologically, residues 562 to 742 (AKNGYLVPII…STSPLYLLIE (181 aa)) are cytoplasmic.

The protein belongs to the HAP2/GCS1 family.

Its subcellular location is the cell membrane. It localises to the cell junction. During fertilization, required for the formation of intercellular membrane pores and subsequent exchange of gametic pronuclei between cells. Probably initiates the formation of intercellular membrane pores by inserting part of its extracellular domain into the cell membrane of the adjoining cell in the mating pair. Mating requires the presence of HAP2 on at least one of the two cells. Mating efficiency is high when HAP2 is present on both cells, and is strongly reduced when HAP2 is present on only one of the two cells. This chain is Hapless 2, found in Tetrahymena thermophila.